We begin with the raw amino-acid sequence, 202 residues long: Holliday junction branch migration complex subunit RuvA (202 aa).

Positions 1 to 63 are domain I; sequence MIASLRGTVL…EDSMTLYGFT (63 aa). The interval 64-142 is domain II; it reads SQDDRDMFHV…AFAPAESADL (79 aa). The interval 143 to 148 is flexible linker; sequence SSAAPA. The tract at residues 149–202 is domain III; sequence AAGPVVEDVVEALIGLGFTDKMARPVVESVVAEQPDAATPVVLRAALSQLGAKK.

It belongs to the RuvA family. Homotetramer. Forms an RuvA(8)-RuvB(12)-Holliday junction (HJ) complex. HJ DNA is sandwiched between 2 RuvA tetramers; dsDNA enters through RuvA and exits via RuvB. An RuvB hexamer assembles on each DNA strand where it exits the tetramer. Each RuvB hexamer is contacted by two RuvA subunits (via domain III) on 2 adjacent RuvB subunits; this complex drives branch migration. In the full resolvosome a probable DNA-RuvA(4)-RuvB(12)-RuvC(2) complex forms which resolves the HJ.

It localises to the cytoplasm. In terms of biological role, the RuvA-RuvB-RuvC complex processes Holliday junction (HJ) DNA during genetic recombination and DNA repair, while the RuvA-RuvB complex plays an important role in the rescue of blocked DNA replication forks via replication fork reversal (RFR). RuvA specifically binds to HJ cruciform DNA, conferring on it an open structure. The RuvB hexamer acts as an ATP-dependent pump, pulling dsDNA into and through the RuvAB complex. HJ branch migration allows RuvC to scan DNA until it finds its consensus sequence, where it cleaves and resolves the cruciform DNA. In Corynebacterium aurimucosum (strain ATCC 700975 / DSM 44827 / CIP 107346 / CN-1) (Corynebacterium nigricans), this protein is Holliday junction branch migration complex subunit RuvA.